The chain runs to 445 residues: Tubby-like F-box protein 14 (445 aa).

The F-box domain maps to 56–114 (SSCWANLPPELLRDVIERLEASEAAWPSRKNVVACAAVCRTWRDMCREIVKNPEFCGKI).

This sequence belongs to the TUB family. In terms of tissue distribution, ubiquitous.

This chain is Tubby-like F-box protein 14 (TULP14), found in Oryza sativa subsp. japonica (Rice).